The sequence spans 165 residues: V-type proton ATPase 16 kDa proteolipid subunit (165 aa).

Topologically, residues 1-10 are lumenal; the sequence is MSSVFSGDET. The helical transmembrane segment at 11 to 33 threads the bilayer; the sequence is APFFGFLGAAAALVFSCMGAAYG. At 34–55 the chain is on the cytoplasmic side; it reads TAKSGVGVASMGVMRPELVMKS. Residues 56 to 76 traverse the membrane as a helical segment; that stretch reads IVPVVMAGVLGIYGLIIAVII. Topologically, residues 77-95 are lumenal; sequence STGINPKAKPYFLFDGYAH. Residues 96–117 traverse the membrane as a helical segment; it reads LSSGLACGLAGLAAGMAIGIVG. Topologically, residues 118-129 are cytoplasmic; that stretch reads DAGVRANAQQPK. A helical membrane pass occupies residues 130-155; the sequence is LFVGMILILIFAEALALYGLIVGIIL. Over 156 to 165 the chain is Lumenal; it reads SSRAGQSRAD.

Belongs to the V-ATPase proteolipid subunit family. V-ATPase is a heteromultimeric enzyme composed of a peripheral catalytic V1 complex (main components: subunits A, B, C, D, E, and F) attached to an integral membrane V0 proton pore complex (main component: the proteolipid protein; which is present as a hexamer that forms the proton-conducting pore).

The protein resides in the vacuole membrane. Its function is as follows. Proton-conducting pore forming subunit of the membrane integral V0 complex of vacuolar ATPase. V-ATPase is responsible for acidifying a variety of intracellular compartments in eukaryotic cells. The chain is V-type proton ATPase 16 kDa proteolipid subunit (VATP-P1) from Avena sativa (Oat).